The sequence spans 176 residues: NAD(P)H-quinone oxidoreductase subunit 6, chloroplastic (176 aa).

Helical transmembrane passes span 10–30, 33–53, 60–80, 95–115, and 152–172; these read ILVL…VLLT, IYSA…YFLL, VAQL…AVMF, IGDG…MTTI, and FYLP…GAIT.

Belongs to the complex I subunit 6 family. NDH is composed of at least 16 different subunits, 5 of which are encoded in the nucleus.

It localises to the plastid. It is found in the chloroplast thylakoid membrane. It catalyses the reaction a plastoquinone + NADH + (n+1) H(+)(in) = a plastoquinol + NAD(+) + n H(+)(out). The catalysed reaction is a plastoquinone + NADPH + (n+1) H(+)(in) = a plastoquinol + NADP(+) + n H(+)(out). Functionally, NDH shuttles electrons from NAD(P)H:plastoquinone, via FMN and iron-sulfur (Fe-S) centers, to quinones in the photosynthetic chain and possibly in a chloroplast respiratory chain. The immediate electron acceptor for the enzyme in this species is believed to be plastoquinone. Couples the redox reaction to proton translocation, and thus conserves the redox energy in a proton gradient. In Saccharum hybrid (Sugarcane), this protein is NAD(P)H-quinone oxidoreductase subunit 6, chloroplastic (ndhG).